The sequence spans 104 residues: Protein MHF2 homolog (104 aa).

This sequence belongs to the CENP-X/MHF2 family.

It localises to the nucleus. Functionally, acts in the same pathway as FANCM to restrain class II meiotic crossing over (CO), and acts with FANCM during meiosis to repair interstrand cross-links (ICLs). The protein is Protein MHF2 homolog of Arabidopsis thaliana (Mouse-ear cress).